The chain runs to 270 residues: Tryptophan synthase alpha chain (270 aa).

Catalysis depends on proton acceptor residues E49 and D60.

Belongs to the TrpA family. Tetramer of two alpha and two beta chains.

The catalysed reaction is (1S,2R)-1-C-(indol-3-yl)glycerol 3-phosphate + L-serine = D-glyceraldehyde 3-phosphate + L-tryptophan + H2O. It functions in the pathway amino-acid biosynthesis; L-tryptophan biosynthesis; L-tryptophan from chorismate: step 5/5. The alpha subunit is responsible for the aldol cleavage of indoleglycerol phosphate to indole and glyceraldehyde 3-phosphate. The sequence is that of Tryptophan synthase alpha chain from Buchnera aphidicola subsp. Melaphis rhois.